The following is a 1080-amino-acid chain: MHKLLVIIAHIIVCAYADFTGFDNEAGAVENNNDNNINLEYKPPTLRHGAGISCVIRPGDFTHVAISNDFFNRANLPAGFVNVNLEVTDFASSARCKAQLESLAPDDTLTTLITGAANCEIDQGGVTMVVYLKKNPEEIYLKNWRCGYKGSGDYVYKTLALQKTIKGQWGDSTDADSPIHPPLITLAARVETSTETEITLTCQRNNRGVTTTYFTGAPFKTVEFTGAENFRAKGDLYGRDLTPSVVPQCVINTPGDPVFKFKNLGPEDYSSKCYSGFLSTTLPEIKPKFTLLRNPYDVDFNGYEPNDVTMDFDTDSLFLFDRNVNMDRVVIDKHPYMVMKFLKPRNFHETPLLNHVDPNQPKHTFMTSISFTMLNLLLGQQLHKATAIQTVEVIKNSGDSASITCPFDSSVEEYLAIFLLDTSTCSVSLSNRNDVVQYNNSCVDPTNFYLLSSRSTSNDQTFTIDLTGNEACISKYATCIYKKKVPGITNILLLPADFASRDKIPDLSDKDVEDTDNCEEDPGLIKTLERGIRLLTFSDSYSYDYHLDQYNVLTGDGCAQLINPCEYDTTASAMKELGRVASVRVPIRFLNKFPDKKIWQCSMYDTDSDKMSWNEMRDNVACSGTELYKSLITPPKPSVYRSDENNFKISCGIIHRSCINKGINTSAVLSGTEIEDTLLEEGEEFTISQYDLLIKNKVLKCETEWGVGESFISDLLPTNSGCSVSGSCVFIDMNTIRCFYDSKNCYSHNINNVKVVFRINDADVPGANVKLSETNRFEDGFFHFLYPVASIVSIPTKNTIGFKLVDEWQRETDEFTVPYPTVEQWAFILESGIECDYTELSSAVLDVSMGRYTGETTITLQYDMYNFPECKTNENETSVDYYLQIRGEIGTSRARREDEDKSMTEWKNLVYISVHDDGDGVVTWQPISNQRDYNLDIFDNKILAAFRYRLTQEKITELFGPYINSLEVRVITESLDKGVYEATKEYLDQTMAYRTLMIPRIPPQPPITTATTQPPIDVMITTQSPNKPTEDEKSLDLEMIGKIILLIAFVIVFVILLTIGIITLVKRHRETLPEDEYLLP.

The N-terminal stretch at 1–17 (MHKLLVIIAHIIVCAYA) is a signal peptide. Topologically, residues 18-1042 (DFTGFDNEAG…KSLDLEMIGK (1025 aa)) are extracellular. N-linked (GlcNAc...) asparagine; by host glycans are attached at residues N439, N664, and N875. A helical membrane pass occupies residues 1043–1063 (IILLIAFVIVFVILLTIGIIT). Topologically, residues 1064–1080 (LVKRHRETLPEDEYLLP) are cytoplasmic.

It localises to the host membrane. This is an uncharacterized protein from Ostreid herpesvirus 1 (isolate France) (OsHV-1).